Consider the following 156-residue polypeptide: E3 ubiquitin-protein ligase LAP (156 aa).

The RING-CH-type zinc-finger motif lies at 1 to 55 (MSDICWICNDVCDERNNFCGCNEEYKVVHIKCMQLWINYSKKKECNLCKTKYNIK). Residues 1 to 73 (MSDICWICND…WNWCFNDKKT (73 aa)) are Cytoplasmic-facing. Residues Cys5, Cys8, Cys19, Cys21, His29, Cys32, Cys45, and Cys48 each contribute to the Zn(2+) site. Residues 74-94 (TLFKIFFILFALVFIFLTITL) traverse the membrane as a helical segment. At 95-111 (SNDMANLVTGINDLICS) the chain is on the lumenal side. The chain crosses the membrane as a helical span at residues 112-132 (IIFLIVYTVVMLTSICFSVFV). At 133–156 (VAIVVDFLLEAKEKNSFLTIREIV) the chain is on the cytoplasmic side.

Belongs to the poxviridae LAP protein family.

The protein resides in the host membrane. The protein localises to the host Golgi apparatus. It localises to the host trans-Golgi network membrane. It is found in the host early endosome membrane. The catalysed reaction is S-ubiquitinyl-[E2 ubiquitin-conjugating enzyme]-L-cysteine + [acceptor protein]-L-lysine = [E2 ubiquitin-conjugating enzyme]-L-cysteine + N(6)-ubiquitinyl-[acceptor protein]-L-lysine.. Its function is as follows. E3 ubiquitin-protein ligase which promotes ubiquitination and subsequent degradation of host MHC-I and CD4 molecules, presumably to prevent lysis of infected cells by cytotoxic T-lymphocytes and NK cell. Binds target molecules through transmembrane interaction. The result of this ubiquitination is the enhancement of the endocytosis of the target chain and the delivery to the lysosome, where it is proteolytically destroyed. This chain is E3 ubiquitin-protein ligase LAP, found in Yaba-like disease virus (YLDV).